The chain runs to 343 residues: Pentatricopeptide repeat-containing protein At1g06270 (343 aa).

PPR repeat units follow at residues Pro98 to Pro133, Asn134 to Pro169, Asp170 to Pro204, Asp205 to Pro240, Arg241 to Val275, and Glu276 to Pro310.

This sequence belongs to the PPR family. P subfamily.

This chain is Pentatricopeptide repeat-containing protein At1g06270, found in Arabidopsis thaliana (Mouse-ear cress).